The primary structure comprises 515 residues: Integrator complex subunit 14 (515 aa).

The 203-residue stretch at 2–204 (PTVVVMDVSL…KNVQSMFGKL (203 aa)) folds into the VWFA domain. Ser-10, Ser-12, and Thr-86 together coordinate Mg(2+). Lys-418 bears the N6-acetyllysine mark.

Belongs to the Integrator subunit 14 family. Component of the Integrator complex, composed of core subunits INTS1, INTS2, INTS3, INTS4, INTS5, INTS6, INTS7, INTS8, INTS9/RC74, INTS10, INTS11/CPSF3L, INTS12, INTS13, INTS14 and INTS15. The core complex associates with protein phosphatase 2A subunits PPP2CA and PPP2R1A, to form the Integrator-PP2A (INTAC) complex. INTS14 is part of the tail subcomplex, composed of INTS10, INTS13, INTS14 and INTS15.

Its subcellular location is the nucleus. Functionally, component of the integrator complex, a multiprotein complex that terminates RNA polymerase II (Pol II) transcription in the promoter-proximal region of genes. The integrator complex provides a quality checkpoint during transcription elongation by driving premature transcription termination of transcripts that are unfavorably configured for transcriptional elongation: the complex terminates transcription by (1) catalyzing dephosphorylation of the C-terminal domain (CTD) of Pol II subunit POLR2A/RPB1 and SUPT5H/SPT5, (2) degrading the exiting nascent RNA transcript via endonuclease activity and (3) promoting the release of Pol II from bound DNA. The integrator complex is also involved in terminating the synthesis of non-coding Pol II transcripts, such as enhancer RNAs (eRNAs), small nuclear RNAs (snRNAs), telomerase RNAs and long non-coding RNAs (lncRNAs). Within the integrator complex, INTS14 is part of the integrator tail module that acts as a platform for the recruitment of transcription factors at promoters. The polypeptide is Integrator complex subunit 14 (Mus musculus (Mouse)).